The following is a 418-amino-acid chain: ATP phosphoribosyltransferase regulatory subunit (418 aa).

This sequence belongs to the class-II aminoacyl-tRNA synthetase family. HisZ subfamily. As to quaternary structure, heteromultimer composed of HisG and HisZ subunits.

It is found in the cytoplasm. Its pathway is amino-acid biosynthesis; L-histidine biosynthesis; L-histidine from 5-phospho-alpha-D-ribose 1-diphosphate: step 1/9. Its function is as follows. Required for the first step of histidine biosynthesis. May allow the feedback regulation of ATP phosphoribosyltransferase activity by histidine. In Acetivibrio thermocellus (strain ATCC 27405 / DSM 1237 / JCM 9322 / NBRC 103400 / NCIMB 10682 / NRRL B-4536 / VPI 7372) (Clostridium thermocellum), this protein is ATP phosphoribosyltransferase regulatory subunit.